A 266-amino-acid polypeptide reads, in one-letter code: Dihydropteroate synthase (266 aa).

The Pterin-binding domain occupies 12 to 260 (AAIMGILNVT…DVKANQDIVA (249 aa)). Asn-19 is a binding site for Mg(2+). Residues Thr-59, Asp-93, Asn-112, Asp-176, Lys-212, and 248 to 250 (RVH) contribute to the (7,8-dihydropterin-6-yl)methyl diphosphate site.

Belongs to the DHPS family. In terms of assembly, homodimer or homotrimer. Mg(2+) is required as a cofactor.

The catalysed reaction is (7,8-dihydropterin-6-yl)methyl diphosphate + 4-aminobenzoate = 7,8-dihydropteroate + diphosphate. Its pathway is cofactor biosynthesis; tetrahydrofolate biosynthesis; 7,8-dihydrofolate from 2-amino-4-hydroxy-6-hydroxymethyl-7,8-dihydropteridine diphosphate and 4-aminobenzoate: step 1/2. Functionally, catalyzes the condensation of para-aminobenzoate (pABA) with 6-hydroxymethyl-7,8-dihydropterin diphosphate (DHPt-PP) to form 7,8-dihydropteroate (H2Pte), the immediate precursor of folate derivatives. The polypeptide is Dihydropteroate synthase (folP) (Streptococcus pyogenes serotype M18 (strain MGAS8232)).